A 318-amino-acid chain; its full sequence is DNA-directed RNA polymerase subunit alpha (318 aa).

The tract at residues Met-1 to Arg-232 is alpha N-terminal domain (alpha-NTD). The interval Lys-246–Asp-318 is alpha C-terminal domain (alpha-CTD).

Belongs to the RNA polymerase alpha chain family. As to quaternary structure, in plastids the minimal PEP RNA polymerase catalytic core is composed of four subunits: alpha, beta, beta', and beta''. When a (nuclear-encoded) sigma factor is associated with the core the holoenzyme is formed, which can initiate transcription.

It is found in the plastid. It localises to the chloroplast. It catalyses the reaction RNA(n) + a ribonucleoside 5'-triphosphate = RNA(n+1) + diphosphate. In terms of biological role, DNA-dependent RNA polymerase catalyzes the transcription of DNA into RNA using the four ribonucleoside triphosphates as substrates. The polypeptide is DNA-directed RNA polymerase subunit alpha (Chlorokybus atmophyticus (Soil alga)).